The sequence spans 161 residues: Effector CFEM5 (161 aa).

The N-terminal stretch at 1 to 23 (MFSLTKSVLFTSIVAIAAQATTA) is a signal peptide. Residues 24-126 (VSSPTQTSLP…KVLDAVVASA (103 aa)) enclose the CFEM domain. 3 disulfides stabilise this stretch: cysteine 46/cysteine 78, cysteine 56/cysteine 63, and cysteine 65/cysteine 100. Aspartate 60 provides a ligand contact to heme.

This sequence belongs to the RBT5 family. As to quaternary structure, interacts with Z.mays LRR5; the interaction is direct. Interacts with Z.mays WAK17 isoform 2; the interaction is direct.

It is found in the membrane. The protein localises to the secreted. Suppresses host programmed cell death during infection by binding to Z.mays WAK17 isoform 2 and Z.mays LRR5, to prevent activation of Z.mays WAK17 isoform 1 and the downstream hypersensitive response. The protein is Effector CFEM5 of Gibberella zeae (strain ATCC MYA-4620 / CBS 123657 / FGSC 9075 / NRRL 31084 / PH-1) (Wheat head blight fungus).